The chain runs to 320 residues: Homoserine kinase (320 aa).

100–110 serves as a coordination point for ATP; the sequence is PLSSGMGSSAA.

Belongs to the GHMP kinase family. Homoserine kinase subfamily.

It localises to the cytoplasm. The enzyme catalyses L-homoserine + ATP = O-phospho-L-homoserine + ADP + H(+). It functions in the pathway amino-acid biosynthesis; L-threonine biosynthesis; L-threonine from L-aspartate: step 4/5. Functionally, catalyzes the ATP-dependent phosphorylation of L-homoserine to L-homoserine phosphate. The polypeptide is Homoserine kinase (Chlorobium phaeobacteroides (strain BS1)).